We begin with the raw amino-acid sequence, 150 residues long: Avidin-related protein 6 (150 aa).

The N-terminal stretch at methionine 1–serine 24 is a signal peptide. Residues arginine 26–threonine 147 form the Avidin-like domain. Cysteines 28 and 105 form a disulfide. Positions 36 and 40 each coordinate biotin. Asparagine 54 is a glycosylation site (N-linked (GlcNAc...) asparagine). Residues tyrosine 57, threonine 59, and aspartate 63 each contribute to the biotin site. A glycan (N-linked (GlcNAc...) asparagine) is linked at asparagine 93. Biotin is bound by residues serine 95, serine 99, and asparagine 140. Asparagine 141 carries an N-linked (GlcNAc...) asparagine glycan.

It belongs to the avidin/streptavidin family. As to quaternary structure, homotetramer. In terms of processing, glycosylated.

It is found in the secreted. Functionally, forms a strong non-covalent specific complex with biotin. The chain is Avidin-related protein 6 (AVR6) from Gallus gallus (Chicken).